We begin with the raw amino-acid sequence, 250 residues long: Pimeloyl-[acyl-carrier protein] methyl ester esterase (250 aa).

Residues Trp12, 71–72, and 138–142 contribute to the substrate site; these read SL and FVALQ. Ser71 functions as the Nucleophile in the catalytic mechanism. Catalysis depends on residues Asp202 and His230. Substrate is bound at residue His230.

It belongs to the AB hydrolase superfamily. Carboxylesterase BioH family. Monomer.

The protein localises to the cytoplasm. It catalyses the reaction 6-carboxyhexanoyl-[ACP] methyl ester + H2O = 6-carboxyhexanoyl-[ACP] + methanol + H(+). Its pathway is cofactor biosynthesis; biotin biosynthesis. Functionally, the physiological role of BioH is to remove the methyl group introduced by BioC when the pimeloyl moiety is complete. It allows to synthesize pimeloyl-ACP via the fatty acid synthetic pathway through the hydrolysis of the ester bonds of pimeloyl-ACP esters. This is Pimeloyl-[acyl-carrier protein] methyl ester esterase from Aromatoleum aromaticum (strain DSM 19018 / LMG 30748 / EbN1) (Azoarcus sp. (strain EbN1)).